The sequence spans 220 residues: Fructose-6-phosphate aldolase (220 aa).

Catalysis depends on lysine 85, which acts as the Schiff-base intermediate with substrate.

This sequence belongs to the transaldolase family. Type 3A subfamily. As to quaternary structure, homodecamer.

The protein resides in the cytoplasm. The enzyme catalyses beta-D-fructose 6-phosphate = dihydroxyacetone + D-glyceraldehyde 3-phosphate. Functionally, catalyzes the reversible formation of fructose 6-phosphate from dihydroxyacetone and D-glyceraldehyde 3-phosphate via an aldolization reaction. This is Fructose-6-phosphate aldolase from Salmonella schwarzengrund (strain CVM19633).